Reading from the N-terminus, the 121-residue chain is Group 1 truncated hemoglobin (121 aa).

Position 1 is an N-acetylmethionine (methionine 1). Position 73 (histidine 73) interacts with heme.

It belongs to the truncated hemoglobin family. Group I subfamily. Monomer. It depends on heme as a cofactor.

The chain is Group 1 truncated hemoglobin from Tetrahymena pyriformis.